The primary structure comprises 323 residues: Arginase-1 (323 aa).

The interval 1–27 is disordered; sequence MSSKPKSLEIIGAPFSKGQPRGGVEKG. Serine 7 is subject to Phosphoserine. Position 17 is an N6-succinyllysine (lysine 17). A phosphoserine mark is found at serine 62 and serine 72. Lysine 75 is subject to N6-succinyllysine. Residues histidine 101, aspartate 124, histidine 126, and aspartate 128 each contribute to the Mn(2+) site. Substrate contacts are provided by residues 126–130 and 137–139; these read HTDIN and SGN. Position 163 is a phosphoserine (serine 163). Aspartate 183 serves as a coordination point for substrate. Serine 217 carries the post-translational modification Phosphoserine. Mn(2+) is bound by residues aspartate 232 and aspartate 234. The substrate site is built by threonine 246 and glutamate 277. Residue threonine 281 is modified to Phosphothreonine.

The protein belongs to the arginase family. Homotrimer. Interacts with CMTM6. Mn(2+) is required as a cofactor. Expressed in macrophages. Expressed in precursor and mature group 2 innate lymphoid cells (ILC2s). Expressed in lung tumor-associated myeloid cells. Expressed in lung tumor-infiltrating dendritic cells.

It localises to the cytoplasm. It is found in the cytoplasmic granule. The catalysed reaction is L-arginine + H2O = urea + L-ornithine. Its pathway is nitrogen metabolism; urea cycle; L-ornithine and urea from L-arginine: step 1/1. In terms of biological role, key element of the urea cycle converting L-arginine to urea and L-ornithine, which is further metabolized into metabolites proline and polyamides that drive collagen synthesis and bioenergetic pathways critical for cell proliferation, respectively; the urea cycle takes place primarily in the liver and, to a lesser extent, in the kidneys. Functions in L-arginine homeostasis in nonhepatic tissues characterized by the competition between nitric oxide synthase (NOS) and arginase for the available intracellular substrate arginine. Arginine metabolism is a critical regulator of innate and adaptive immune responses. Involved in an antimicrobial effector pathway in polymorphonuclear granulocytes (PMN). Upon PMN cell death is liberated from the phagolysosome and depletes arginine in the microenvironment leading to suppressed T cell and natural killer (NK) cell proliferation and cytokine secretion. In group 2 innate lymphoid cells (ILC2s) promotes acute type 2 inflammation in the lung and is involved in optimal ILC2 proliferation but not survival. Plays a role in the immune response of alternatively activated or M2 macrophages in processes such as wound healing and tissue regeneration, immune defense against multicellular pathogens and parasites, and immune suppression and allergic inflammation; the regulatory outcome seems to be organ specific. In tumor-infiltrating dendritic cells (DCs) and myeloid-derived suppressor cells (MDSCs) plays a role in suppression of T cell-mediated antitumor immunity. The sequence is that of Arginase-1 (Arg1) from Mus musculus (Mouse).